We begin with the raw amino-acid sequence, 504 residues long: Beta-xylosidase (504 aa).

The active-site Proton donor is the glutamate 160. Residue glutamate 280 is the Nucleophile of the active site.

The protein belongs to the glycosyl hydrolase 39 family.

The enzyme catalyses Hydrolysis of (1-&gt;4)-beta-D-xylans, to remove successive D-xylose residues from the non-reducing termini.. This chain is Beta-xylosidase (xynB), found in Geobacillus stearothermophilus (Bacillus stearothermophilus).